Consider the following 354-residue polypeptide: Photosystem II protein D1 1 (354 aa).

The next 3 helical transmembrane spans lie at 29-46 (YIGWFGVLMIPTLLTATT), 118-133 (HFLIGVFCYMGREWEL), and 142-156 (WIAVAYSAPVAAATA). Residue His-118 coordinates chlorophyll a. Position 126 (Tyr-126) interacts with pheophytin a. [CaMn4O5] cluster-binding residues include Asp-170 and Glu-189. A helical transmembrane segment spans residues 197–218 (FHQLGVAGVFGGALFSAMHGSL). His-198 lines the chlorophyll a pocket. Residues His-215 and 264 to 265 (SF) each bind a quinone. Residue His-215 participates in Fe cation binding. His-272 lines the Fe cation pocket. The chain crosses the membrane as a helical span at residues 274-288 (FLAAWPVIGIWFTAL). Residues His-332, Glu-333, Asp-342, and Ala-344 each coordinate [CaMn4O5] cluster. Positions 345-354 (AVEVAPAIRG) are excised as a propeptide.

The protein belongs to the reaction center PufL/M/PsbA/D family. PSII is composed of 1 copy each of membrane proteins PsbA, PsbB, PsbC, PsbD, PsbE, PsbF, PsbH, PsbI, PsbJ, PsbK, PsbL, PsbM, PsbT, PsbX, PsbY, PsbZ, Psb30/Ycf12, peripheral proteins PsbO, CyanoQ (PsbQ), PsbU, PsbV and a large number of cofactors. It forms dimeric complexes. The D1/D2 heterodimer binds P680, chlorophylls that are the primary electron donor of PSII, and subsequent electron acceptors. It shares a non-heme iron and each subunit binds pheophytin, quinone, additional chlorophylls, carotenoids and lipids. D1 provides most of the ligands for the Mn4-Ca-O5 cluster of the oxygen-evolving complex (OEC). There is also a Cl(-1) ion associated with D1 and D2, which is required for oxygen evolution. The PSII complex binds additional chlorophylls, carotenoids and specific lipids. is required as a cofactor. In terms of processing, tyr-161 forms a radical intermediate that is referred to as redox-active TyrZ, YZ or Y-Z. Post-translationally, C-terminally processed by CtpA; processing is essential to allow assembly of the oxygen-evolving complex and thus photosynthetic growth.

The protein localises to the cellular thylakoid membrane. The catalysed reaction is 2 a plastoquinone + 4 hnu + 2 H2O = 2 a plastoquinol + O2. Its function is as follows. Photosystem II (PSII) is a light-driven water:plastoquinone oxidoreductase that uses light energy to abstract electrons from H(2)O, generating O(2) and a proton gradient subsequently used for ATP formation. It consists of a core antenna complex that captures photons, and an electron transfer chain that converts photonic excitation into a charge separation. The D1/D2 (PsbA/PsbD) reaction center heterodimer binds P680, the primary electron donor of PSII as well as several subsequent electron acceptors. This chain is Photosystem II protein D1 1, found in Synechococcus sp. (strain JA-3-3Ab) (Cyanobacteria bacterium Yellowstone A-Prime).